The sequence spans 156 residues: Small ribosomal subunit protein uS7 (156 aa).

This sequence belongs to the universal ribosomal protein uS7 family. In terms of assembly, part of the 30S ribosomal subunit. Contacts proteins S9 and S11.

Its function is as follows. One of the primary rRNA binding proteins, it binds directly to 16S rRNA where it nucleates assembly of the head domain of the 30S subunit. Is located at the subunit interface close to the decoding center, probably blocks exit of the E-site tRNA. This Mycoplasmopsis agalactiae (strain NCTC 10123 / CIP 59.7 / PG2) (Mycoplasma agalactiae) protein is Small ribosomal subunit protein uS7.